A 143-amino-acid polypeptide reads, in one-letter code: Large ribosomal subunit protein uL11 (143 aa).

The protein belongs to the universal ribosomal protein uL11 family. In terms of assembly, part of the ribosomal stalk of the 50S ribosomal subunit. Interacts with L10 and the large rRNA to form the base of the stalk. L10 forms an elongated spine to which L12 dimers bind in a sequential fashion forming a multimeric L10(L12)X complex. One or more lysine residues are methylated.

In terms of biological role, forms part of the ribosomal stalk which helps the ribosome interact with GTP-bound translation factors. The protein is Large ribosomal subunit protein uL11 of Borrelia garinii subsp. bavariensis (strain ATCC BAA-2496 / DSM 23469 / PBi) (Borreliella bavariensis).